We begin with the raw amino-acid sequence, 563 residues long: Coiled-coil domain-containing protein 63 (563 aa).

Residues 1 to 29 (MSVLKKNRRKDSDTPQEPSEKAKEQQAEA) form a disordered region. A compositionally biased stretch (basic and acidic residues) spans 10–29 (KDSDTPQEPSEKAKEQQAEA). 3 coiled-coil regions span residues 18–201 (PSEK…QLQH), 233–291 (AMKD…AKKH), and 341–422 (TELN…KKIN).

Its function is as follows. Plays a role in spermiogenesis. Involved in the elongation of flagella and the formation of sperm heads. This Homo sapiens (Human) protein is Coiled-coil domain-containing protein 63.